The chain runs to 218 residues: NAD(P)H-quinone oxidoreductase subunit U, chloroplastic (218 aa).

Residues 1–53 constitute a chloroplast transit peptide; it reads MASLSTITQPSLVHIPGESVLHHVPSTCSFPWKPTINTKRIICSPARNSSEVS. Residues 47–72 form a disordered region; that stretch reads RNSSEVSAEAETEGGSSTAVDEAPKE. The 65-residue stretch at 95–159 folds into the J domain; sequence DHYGRLGIFR…EERRMYDWSL (65 aa). The chain crosses the membrane as a helical span at residues 197-217; sequence ILGYFIGAWLVLGVALSVAFN.

Part of the chloroplast NDH complex, composed of a mixture of chloroplast and nucleus encoded subunits. Component of the electron donor-binding subcomplex, at least composed of NDHS, NDHT and NDHU.

It is found in the plastid. Its subcellular location is the chloroplast thylakoid membrane. It carries out the reaction a plastoquinone + NADH + (n+1) H(+)(in) = a plastoquinol + NAD(+) + n H(+)(out). The catalysed reaction is a plastoquinone + NADPH + (n+1) H(+)(in) = a plastoquinol + NADP(+) + n H(+)(out). Functionally, NDH shuttles electrons from NAD(P)H:plastoquinone, via FMN and iron-sulfur (Fe-S) centers, to quinones in the photosynthetic chain and possibly in a chloroplast respiratory chain. The immediate electron acceptor for the enzyme in this species is believed to be plastoquinone. Couples the redox reaction to proton translocation, and thus conserves the redox energy in a proton gradient. The polypeptide is NAD(P)H-quinone oxidoreductase subunit U, chloroplastic (Arabidopsis thaliana (Mouse-ear cress)).